Consider the following 236-residue polypeptide: uncharacterized protein (236 aa).

Residues 1 to 12 (MKLLGHRKSHGH) show a composition bias toward basic residues. Positions 1-108 (MKLLGHRKSH…KAANRARMTE (108 aa)) are disordered. Positions 13–31 (QRADASPDAGSKDGCRPDS) are enriched in basic and acidic residues. Residues 32-47 (GRTSGSDTSRGSQTTG) show a composition bias toward low complexity. Over residues 52-65 (PTPKRNQSRRHTKK) the composition is skewed to basic residues. A compositionally biased stretch (low complexity) spans 67-78 (PVAPAPMTAAQA). The span at 90-108 (LSREERRAEKAANRARMTE) shows a compositional bias: basic and acidic residues. 2 helical membrane-spanning segments follow: residues 142-162 (NLLGLFMPSALTLLFVMFAVP) and 166-186 (FYLSPAMLILLALMTIDAIIL).

It localises to the cell membrane. This is an uncharacterized protein from Mycobacterium tuberculosis (strain CDC 1551 / Oshkosh).